A 556-amino-acid polypeptide reads, in one-letter code: Arginine--tRNA ligase (556 aa).

The 'HIGH' region signature appears at 133–143 (ANPTGPIHIGH).

Belongs to the class-I aminoacyl-tRNA synthetase family. Monomer.

It is found in the cytoplasm. It carries out the reaction tRNA(Arg) + L-arginine + ATP = L-arginyl-tRNA(Arg) + AMP + diphosphate. In Dehalococcoides mccartyi (strain CBDB1), this protein is Arginine--tRNA ligase.